Consider the following 421-residue polypeptide: Diaminobutyrate--2-oxoglutarate transaminase (421 aa).

Lysine 262 is modified (N6-(pyridoxal phosphate)lysine).

It belongs to the class-III pyridoxal-phosphate-dependent aminotransferase family. Pyridoxal 5'-phosphate serves as cofactor.

The enzyme catalyses L-2,4-diaminobutanoate + 2-oxoglutarate = L-aspartate 4-semialdehyde + L-glutamate. It participates in amine and polyamine biosynthesis; ectoine biosynthesis; L-ectoine from L-aspartate 4-semialdehyde: step 1/3. Catalyzes reversively the conversion of L-aspartate beta-semialdehyde (ASA) to L-2,4-diaminobutyrate (DABA) by transamination with L-glutamate. This is Diaminobutyrate--2-oxoglutarate transaminase (ectB) from Vibrio parahaemolyticus serotype O3:K6 (strain RIMD 2210633).